A 446-amino-acid polypeptide reads, in one-letter code: Probable inactive lipase MT1628 (446 aa).

Belongs to the AB hydrolase superfamily. Lipase family.

This chain is Probable inactive lipase MT1628, found in Mycobacterium tuberculosis (strain CDC 1551 / Oshkosh).